The following is a 131-amino-acid chain: Torsin-1A-interacting protein 2, isoform IFRG15 (131 aa).

This is Torsin-1A-interacting protein 2, isoform IFRG15 (Tor1aip2) from Mus musculus (Mouse).